The following is a 495-amino-acid chain: Protein SLENDER RICE1-LIKE 1 (495 aa).

The 373-residue stretch at 77–449 folds into the GRAS domain; the sequence is EEEEVAGIRL…RPLFSASAWE (373 aa). Residues 84–140 are leucine repeat I (LRI); that stretch reads IRLVHLLMSCAGAIEAGDHALASAQLADSHAALAAVSAASGIGRVAVHFTTALSRRL. The interval 158–223 is VHIID; sequence YHHFYEACPY…GGPPFLRITG (66 aa). Residues 189–193 carry the VHIID motif; that stretch reads VHVID. The tract at residues 237-269 is leucine repeat II (LRII); sequence DVGLRLADLARSVRVRFSFRGVAANSLDEVRPW. The PFYRE stretch occupies residues 279–371; sequence VAFNSVLQLH…EAYLQREICD (93 aa). Positions 287-291 match the LXXLL motif motif; it reads LHRLL. The segment at 374 to 449 is SAW; that stretch reads CGEGAARRER…RPLFSASAWE (76 aa). A disordered region spans residues 451 to 495; that stretch reads AGDGGGDNNNNSNSNVSGSSGSDSNNSGSSNGKSSGARDGSSVCL. Low complexity predominate over residues 458 to 485; the sequence is NNNNSNSNVSGSSGSDSNNSGSSNGKSS.

Belongs to the GRAS family. As to expression, expressed in elongating internodes and flowers. Expressed in floral meristem, stamen primordia and tapetum in developing anthers. Expressed at low levels in roots, shoot apices and rachis.

The protein resides in the nucleus. In terms of biological role, probable transcriptional regulator that acts as a repressor of the gibberellin (GA) signaling pathway. Its repressive activity is weaker than that of SLR1. Its overexpression prevents the GA signaling pathway and induces a dwarf phenotype. The chain is Protein SLENDER RICE1-LIKE 1 from Oryza sativa subsp. japonica (Rice).